A 300-amino-acid polypeptide reads, in one-letter code: MKIAILSRDGTLYSCKRLREAAIQRGHLVEILDPLSCYMNINPAASSIHYKGRKLPHFDAVIPRIGTAITFYGTAALRQFEMLGSYPLNESVAIARARDKLRSMQLLARQGIDLPVTGIAHSPDDTSDLIDMVGGAPLVVKLVEGTQGIGVVLAETRQAAESVIDAFRGLNAHILVQEYIKEAQGCDIRCLVVGDEVVAAIERRAKEGDFRSNLHRGGAASVASITPQEREIAIKAARTMALDVAGVDILRANRGPLVMEVNASPGLEGIEKTTGIDIAGKMIRWIERHATTEYCLKTGG.

The region spanning 104-287 (MQLLARQGID…IAGKMIRWIE (184 aa)) is the ATP-grasp domain. ATP contacts are provided by residues K141, 178 to 179 (EY), D187, and 211 to 213 (RSN). Residues D248, E260, and N262 each contribute to the Mg(2+) site. Positions 248, 260, and 262 each coordinate Mn(2+).

It belongs to the RimK family. Mg(2+) serves as cofactor. It depends on Mn(2+) as a cofactor.

In terms of biological role, an L-glutamate ligase that catalyzes the ATP-dependent post-translational addition of glutamate residues to the C-terminus of ribosomal protein bS6 (RpsF). Is also able to catalyze the synthesis of poly-alpha-glutamate in vitro, via ATP hydrolysis from unprotected glutamate as substrate. The number of glutamate residues added to either RpsF or to poly-alpha-glutamate changes with pH. This Shigella dysenteriae serotype 1 (strain Sd197) protein is Ribosomal protein bS6--L-glutamate ligase.